Consider the following 344-residue polypeptide: Anthranilate phosphoribosyltransferase (344 aa).

Residues G81, 84–85 (GD), S89, 91–94 (NIST), 109–117 (KHGNRALSS), and A121 contribute to the 5-phospho-alpha-D-ribose 1-diphosphate site. Position 81 (G81) interacts with anthranilate. Mg(2+) is bound at residue S93. N112 lines the anthranilate pocket. R167 lines the anthranilate pocket. Mg(2+) contacts are provided by D226 and E227.

It belongs to the anthranilate phosphoribosyltransferase family. In terms of assembly, homodimer. The cofactor is Mg(2+).

It catalyses the reaction N-(5-phospho-beta-D-ribosyl)anthranilate + diphosphate = 5-phospho-alpha-D-ribose 1-diphosphate + anthranilate. Its pathway is amino-acid biosynthesis; L-tryptophan biosynthesis; L-tryptophan from chorismate: step 2/5. Catalyzes the transfer of the phosphoribosyl group of 5-phosphorylribose-1-pyrophosphate (PRPP) to anthranilate to yield N-(5'-phosphoribosyl)-anthranilate (PRA). The chain is Anthranilate phosphoribosyltransferase from Xanthobacter autotrophicus (strain ATCC BAA-1158 / Py2).